Consider the following 218-residue polypeptide: Ribonuclease HII (218 aa).

Positions 24–218 (ESIAGVDEVG…KLFAVNGSLT (195 aa)) constitute an RNase H type-2 domain. A divalent metal cation-binding residues include Asp30, Glu31, and Asp126.

This sequence belongs to the RNase HII family. It depends on Mn(2+) as a cofactor. Mg(2+) is required as a cofactor.

The protein resides in the cytoplasm. It catalyses the reaction Endonucleolytic cleavage to 5'-phosphomonoester.. Endonuclease that specifically degrades the RNA of RNA-DNA hybrids. The polypeptide is Ribonuclease HII (Prochlorococcus marinus (strain MIT 9313)).